The primary structure comprises 156 residues: MEDEDDIFENQPEFLAERNVWARVGGPDIGLGLGGMINLKKSGYTIGEKFKLIAAATIKMLNDGMEEDLLSDAALTRMLSLVESDKMPDFQTKNPSAFAMGYVVAIHSNYNTLEIDREKLEVIFKLNNELESSFFSRIEERDILRYVRFCLIHKLK.

This is an uncharacterized protein from Invertebrate iridescent virus 3 (IIV-3).